The following is a 180-amino-acid chain: UPF0340 protein BLi03936/BL03990 (180 aa).

This sequence belongs to the UPF0340 family.

The polypeptide is UPF0340 protein BLi03936/BL03990 (Bacillus licheniformis (strain ATCC 14580 / DSM 13 / JCM 2505 / CCUG 7422 / NBRC 12200 / NCIMB 9375 / NCTC 10341 / NRRL NRS-1264 / Gibson 46)).